Consider the following 638-residue polypeptide: MNNQGKNIIVWAVIFVFVILLFNVFQSDGLLSSKNNISFSEFLTKVDEKTVNSVKIQGRIIEGTSNDGSSFSTYAPDYPDLVNRLNNNDVNIEVVPPETRMNTFLSFLISWFPMLLLIGVWVFFMRQMHGGGKAMGFGKSKAKLLSDKGPKITFKDVAGIDEAKDELTEIVDFLRDPSKFQKLGGKIPKGCLLIGPPGTGKTLLAKAIAGEANVPFFSISGSDFVEMFVGVGASRVRDMFEQGKRNAPCIIFIDEIDAVGRHRGIGMGGGNDEREQTLNQMLVEMDGFEANEGVVIIAATNRPDVLDNALLRPGRFDRQITVSNPDIDGREKILQVHLKKVKYSTKIVPRIIARGTPGFSGAELANLVNEATLIAARRNKKEVEMHDLEEAKDKVMMGVERRSMIMSDEQKKLTAYHEGGHALVGLYCLASDPIHKATIIPRGRALGMVMRLPENDRFSMPRDKMEADIAVAMAGRVAEEIIFGKEKVTSGASSDIKMATRMAKAMVTDWGLSDKVGPVYHGSASEDMYTNRNSSSDRSESTSELIDEEVKKIVTTGYDLAKDILTKHLDQLHILAKALIEYETLSGQQIKNLLSSRQLDSEEENNFPFGAASSTIKIAEEKDLKKAKPIKAKKEDKS.

Residues 1–4 (MNNQ) are Cytoplasmic-facing. A helical membrane pass occupies residues 5 to 25 (GKNIIVWAVIFVFVILLFNVF). The Periplasmic portion of the chain corresponds to 26–103 (QSDGLLSSKN…VVPPETRMNT (78 aa)). A helical membrane pass occupies residues 104–124 (FLSFLISWFPMLLLIGVWVFF). The Cytoplasmic portion of the chain corresponds to 125-638 (MRQMHGGGKA…PIKAKKEDKS (514 aa)). 195–202 (GPPGTGKT) contacts ATP. Residue His-417 coordinates Zn(2+). The active site involves Glu-418. Residues His-421 and Asp-495 each contribute to the Zn(2+) site. The disordered stretch occupies residues 523–544 (SASEDMYTNRNSSSDRSESTSE).

This sequence in the central section; belongs to the AAA ATPase family. In the C-terminal section; belongs to the peptidase M41 family. As to quaternary structure, homohexamer. Zn(2+) serves as cofactor.

It localises to the cell inner membrane. Functionally, acts as a processive, ATP-dependent zinc metallopeptidase for both cytoplasmic and membrane proteins. Plays a role in the quality control of integral membrane proteins. In Rickettsia bellii (strain RML369-C), this protein is ATP-dependent zinc metalloprotease FtsH.